We begin with the raw amino-acid sequence, 424 residues long: MNQEDNTGGGGIFGLFKWTKXALFGTDISPSMKYKDQEERRDRSRYAQDDTNFSMKFGNDSNRRSTNLSRSNSWSGLDSTLHRKYELLPEYNENGFNSIVNGDHHSKERIRSLRSPAPIVPREPLRNEPTDTFGHRLHTKRRTINELSNSQIPFIPPQEDDPLLSKLFNKDGVNEVRRSPYKLSVKDIPGKFPSPLTKRDEIDNYYVRDEDACHKNREYKKAYFDLFAQMDLNSRDLEDLCEDVREQREQFHRNEQTYKQAYEEMRAELVNELKKSKTLFENYYSLGQKYKSLKKXLDQTISHEAELATSRERLYQEEDLKNFEIQTLKQRLSDLELKYTNLQIEKDMQRDNYESEIHDLLLQLSLRNNERKDTSAGSNIFSTGQYDRTPFHNGNNSYDSNSHSWDTDYLKKYRRIHRTLKQKS.

A Phosphoserine modification is found at Ser-29. Residues 34–48 are compositionally biased toward basic and acidic residues; it reads YKDQEERRDRSRYAQ. The tract at residues 34-76 is disordered; sequence YKDQEERRDRSRYAQDDTNFSMKFGNDSNRRSTNLSRSNSWSG. Residues 64-75 are compositionally biased toward low complexity; it reads RSTNLSRSNSWS. A phosphoserine mark is found at Ser-73 and Ser-115. A coiled-coil region spans residues 229–355; it reads QMDLNSRDLE…KDMQRDNYES (127 aa).

This sequence belongs to the BBP1 family. Homodimer. Interacts with KAR1, MPS2 and SPC29.

It localises to the cytoplasm. It is found in the cytoskeleton. The protein resides in the microtubule organizing center. Its subcellular location is the spindle pole body. In terms of biological role, component of the spindle pole body (SPB) required for insertion of the nascent SPB into the nuclear envelope and for the proper execution of spindle pole body (SPB) duplication. Connects the central plaque of the SPB with the half-bridge. Required for proper localization of CDC5 at the SPB and for proper M-phase progression. The polypeptide is Spindle pole component BBP1 (BBP1) (Saccharomyces cerevisiae (strain FostersO) (Baker's yeast)).